The chain runs to 107 residues: U1-lycotoxin-Ls1l (107 aa).

The N-terminal stretch at 1–20 (MMKVLVVVALLVTLISYSSS) is a signal peptide. The propeptide occupies 21–41 (EGIDDLEADELLSLMANEQTR). 4 disulfide bridges follow: C44–C59, C51–C68, C58–C86, and C70–C84.

The protein belongs to the neurotoxin 19 (CSTX) family. 04 (U1-Lctx) subfamily. As to expression, expressed by the venom gland.

It is found in the secreted. In Lycosa singoriensis (Wolf spider), this protein is U1-lycotoxin-Ls1l.